A 553-amino-acid chain; its full sequence is Retrotransposon Gag-like protein 3 (553 aa).

Residues 2 to 43 (VEDLAASYVTLKLENEILQAQVKRLMEENAALQAQIPELQKS) adopt a coiled-coil conformation. 2 disordered regions span residues 38–274 (PELQ…PLDP) and 474–514 (SGGV…EAER). Positions 45–57 (AVKEHEPLRKPSE) are enriched in basic and acidic residues. The segment covering 58–73 (AQEPPESPEFPAARES) has biased composition (low complexity). Residues 87–113 (EPTKIREPREPSAISELREPPEIKEPQ) are compositionally biased toward basic and acidic residues. The segment covering 118 to 127 (TNESGESSAI) has biased composition (polar residues). Residues 132–147 (GSPEIKEPHLPPKSKE) show a composition bias toward basic and acidic residues. A compositionally biased stretch (polar residues) spans 239–250 (QTVPEYQETSSQ). Residues 474-483 (SGGVDSSSSS) show a composition bias toward low complexity. The segment covering 495–507 (TENQPVQATSNRP) has biased composition (polar residues). The segment at 523–537 (CLYCGHPGHFARDCP) adopts a CCHC-type zinc-finger fold.

As to expression, expressed in embryonic myogenic progenitor cells, not expressed in adult and aged satellite cells.

Its subcellular location is the nucleus. In terms of biological role, may function as a transcriptional regulator. Plays a role in postnatal myogenesis, may be involved in the regulation of satellite cells self-renewal. The polypeptide is Retrotransposon Gag-like protein 3 (Mus musculus (Mouse)).